Reading from the N-terminus, the 303-residue chain is Proteasome subunit beta (303 aa).

Residues 1-67 (MTWQFPDRLS…SGGTGQLPHG (67 aa)) constitute a propeptide, removed in mature form; by autocatalysis. Catalysis depends on Thr68, which acts as the Nucleophile.

The protein belongs to the peptidase T1B family. In terms of assembly, the 20S proteasome core is composed of 14 alpha and 14 beta subunits that assemble into four stacked heptameric rings, resulting in a barrel-shaped structure. The two inner rings, each composed of seven catalytic beta subunits, are sandwiched by two outer rings, each composed of seven alpha subunits. The catalytic chamber with the active sites is on the inside of the barrel. Has a gated structure, the ends of the cylinder being occluded by the N-termini of the alpha-subunits. Is capped by the proteasome-associated ATPase, ARC.

It localises to the cytoplasm. It catalyses the reaction Cleavage of peptide bonds with very broad specificity.. It participates in protein degradation; proteasomal Pup-dependent pathway. With respect to regulation, the formation of the proteasomal ATPase ARC-20S proteasome complex, likely via the docking of the C-termini of ARC into the intersubunit pockets in the alpha-rings, may trigger opening of the gate for substrate entry. Interconversion between the open-gate and close-gate conformations leads to a dynamic regulation of the 20S proteasome proteolysis activity. In terms of biological role, component of the proteasome core, a large protease complex with broad specificity involved in protein degradation. The chain is Proteasome subunit beta from Mycobacterium avium (strain 104).